Consider the following 187-residue polypeptide: Interferon alpha-1/2 (187 aa).

A signal peptide spans 1 to 23 (MALPCSFSVALVLLSCHSLCCLA). 2 cysteine pairs are disulfide-bonded: Cys24–Cys122 and Cys52–Cys160. A glycan (N-linked (GlcNAc...) asparagine) is linked at Asn101.

Belongs to the alpha/beta interferon family.

Its subcellular location is the secreted. In terms of biological role, produced by macrophages, IFN-alpha have antiviral activities. Interferon stimulates the production of two enzymes: a protein kinase and an oligoadenylate synthetase. In Canis lupus familiaris (Dog), this protein is Interferon alpha-1/2.